The primary structure comprises 372 residues: Cytochrome b (372 aa).

4 helical membrane passes run 25–45, 69–90, 105–125, and 170–190; these read FGSMLLTCLMLQTITGFFLAL, WIMQNLHAISASLFFVCIYIHI, WLSGTALLITLMATAFFGYVL, and FFALHFILPFIIISLSSIHII. Heme b-binding residues include His75 and His89. Residues His174 and His188 each contribute to the heme b site. His193 is an a ubiquinone binding site. Transmembrane regions (helical) follow at residues 218–238, 280–300, 312–332, and 339–358; these read YKDMLMATTMITLLFLILSFA, LGGTLALIMSVMILTTMPFTH, LSQILFWTLIATFITITWTAS, and FITISQTTSIIYFFFFITTP.

The protein belongs to the cytochrome b family. As to quaternary structure, the cytochrome bc1 complex contains 3 respiratory subunits (MT-CYB, CYC1 and UQCRFS1), 2 core proteins (UQCRC1 and UQCRC2) and probably 6 low-molecular weight proteins. Requires heme b as cofactor.

Its subcellular location is the mitochondrion inner membrane. In terms of biological role, component of the ubiquinol-cytochrome c reductase complex (complex III or cytochrome b-c1 complex) that is part of the mitochondrial respiratory chain. The b-c1 complex mediates electron transfer from ubiquinol to cytochrome c. Contributes to the generation of a proton gradient across the mitochondrial membrane that is then used for ATP synthesis. The polypeptide is Cytochrome b (MT-CYB) (Naja nivea (Cape cobra)).